A 291-amino-acid chain; its full sequence is Pantothenate synthetase 1 (291 aa).

The Proton donor role is filled by His37. 147–150 (GEKD) is an ATP binding site. Gln153 contributes to the (R)-pantoate binding site. 184–187 (ISSR) is an ATP binding site.

The protein belongs to the pantothenate synthetase family. Homodimer.

The protein localises to the cytoplasm. The enzyme catalyses (R)-pantoate + beta-alanine + ATP = (R)-pantothenate + AMP + diphosphate + H(+). Its pathway is cofactor biosynthesis; (R)-pantothenate biosynthesis; (R)-pantothenate from (R)-pantoate and beta-alanine: step 1/1. Its function is as follows. Catalyzes the condensation of pantoate with beta-alanine in an ATP-dependent reaction via a pantoyl-adenylate intermediate. In Frankia alni (strain DSM 45986 / CECT 9034 / ACN14a), this protein is Pantothenate synthetase 1.